The chain runs to 422 residues: UDP-N-acetylmuramoylalanine--D-glutamate ligase (422 aa).

Position 102–108 (102–108 (GTNGKTT)) interacts with ATP.

It belongs to the MurCDEF family.

Its subcellular location is the cytoplasm. The catalysed reaction is UDP-N-acetyl-alpha-D-muramoyl-L-alanine + D-glutamate + ATP = UDP-N-acetyl-alpha-D-muramoyl-L-alanyl-D-glutamate + ADP + phosphate + H(+). It participates in cell wall biogenesis; peptidoglycan biosynthesis. Its function is as follows. Cell wall formation. Catalyzes the addition of glutamate to the nucleotide precursor UDP-N-acetylmuramoyl-L-alanine (UMA). The sequence is that of UDP-N-acetylmuramoylalanine--D-glutamate ligase from Helicobacter pylori (strain HPAG1).